Here is a 352-residue protein sequence, read N- to C-terminus: 3-dehydroquinate synthase (352 aa).

Residues 60–65, 118–119, Lys-131, Lys-140, and 158–161 each bind NAD(+); these read DGEGAK, TT, and FLET. The Zn(2+) site is built by Glu-173, His-237, and His-253.

Belongs to the sugar phosphate cyclases superfamily. Dehydroquinate synthase family. It depends on NAD(+) as a cofactor. Co(2+) is required as a cofactor. The cofactor is Zn(2+).

The protein resides in the cytoplasm. It catalyses the reaction 7-phospho-2-dehydro-3-deoxy-D-arabino-heptonate = 3-dehydroquinate + phosphate. It participates in metabolic intermediate biosynthesis; chorismate biosynthesis; chorismate from D-erythrose 4-phosphate and phosphoenolpyruvate: step 2/7. Its function is as follows. Catalyzes the conversion of 3-deoxy-D-arabino-heptulosonate 7-phosphate (DAHP) to dehydroquinate (DHQ). This chain is 3-dehydroquinate synthase, found in Sulfurisphaera tokodaii (strain DSM 16993 / JCM 10545 / NBRC 100140 / 7) (Sulfolobus tokodaii).